We begin with the raw amino-acid sequence, 84 residues long: U8-theraphotoxin-Hhn1a (84 aa).

The signal sequence occupies residues 1–21 (MKVVLLECLVWMMAMMELVSC). 5 disulfides stabilise this stretch: Cys23-Cys35, Cys29-Cys44, Cys34-Cys67, Cys54-Cys75, and Cys69-Cys81.

This sequence belongs to the AVIT (prokineticin) family. As to expression, expressed by the venom gland.

Its subcellular location is the secreted. This Cyriopagopus hainanus (Chinese bird spider) protein is U8-theraphotoxin-Hhn1a.